Consider the following 526-residue polypeptide: Protein mono-ADP-ribosyltransferase PARP3 (526 aa).

The tract at residues 1–55 (MAPKRRAPPASQPADGGKKAKGGQEEEEDAWSSALNALKTAPREKPPATIDGQCP) is disordered. In terms of domain architecture, WGR spans 61 to 151 (DAKVYEDYDC…DNFVAQPGKY (91 aa)). The PARP alpha-helical domain maps to 183 to 301 (PCALDETTQK…DIEVAQSLQA (119 aa)). In terms of domain architecture, PARP catalytic spans 312–526 (HPLDRDYALL…RIRYLVQLHF (215 aa)).

This sequence belongs to the ARTD/PARP family.

Its subcellular location is the nucleus. The protein resides in the chromosome. It localises to the cytoplasm. It is found in the cytoskeleton. The protein localises to the microtubule organizing center. Its subcellular location is the centrosome. The protein resides in the centriole. It carries out the reaction L-aspartyl-[protein] + NAD(+) = 4-O-(ADP-D-ribosyl)-L-aspartyl-[protein] + nicotinamide. It catalyses the reaction L-glutamyl-[protein] + NAD(+) = 5-O-(ADP-D-ribosyl)-L-glutamyl-[protein] + nicotinamide. The enzyme catalyses L-lysyl-[protein] + NAD(+) = N(6)-(ADP-D-ribosyl)-L-lysyl-[protein] + nicotinamide + H(+). In terms of biological role, mono-ADP-ribosyltransferase that mediates mono-ADP-ribosylation of target proteins and plays a key role in the response to DNA damage. Mediates mono-ADP-ribosylation of glutamate, aspartate or lysine residues on target proteins. In contrast to PARP1 and PARP2, it is not able to mediate poly-ADP-ribosylation. Involved in DNA repair by mediating mono-ADP-ribosylation of a limited number of acceptor proteins involved in chromatin architecture and in DNA metabolism, such as histone H2B, XRCC5 and XRCC6. ADP-ribosylation follows DNA damage and appears as an obligatory step in a detection/signaling pathway leading to the reparation of DNA strand breaks. Involved in single-strand break repair by catalyzing mono-ADP-ribosylation of histone H2B on 'Glu-2' (H2BE2ADPr) of nucleosomes containing nicked DNA. Cooperates with the XRCC5-XRCC6 (Ku80-Ku70) heterodimer to limit end-resection thereby promoting accurate NHEJ. Associates with a number of DNA repair factors and is involved in the response to exogenous and endogenous DNA strand breaks. Together with APLF, promotes the retention of the LIG4-XRCC4 complex on chromatin and accelerate DNA ligation during non-homologous end-joining (NHEJ). In addition to proteins, also able to ADP-ribosylate DNA: mediates DNA mono-ADP-ribosylation of DNA strand break termini via covalent addition of a single ADP-ribose moiety to a 5'- or 3'-terminal phosphate residues in DNA containing multiple strand breaks. This Gallus gallus (Chicken) protein is Protein mono-ADP-ribosyltransferase PARP3.